The primary structure comprises 1988 residues: Sodium channel protein type 9 subunit alpha (1988 aa).

At 1 to 125 (MAMLPPPGPQ…RRISIKILVH (125 aa)) the chain is on the cytoplasmic side. The span at 26-39 (RIAERKSKEPKEEK) shows a compositional bias: basic and acidic residues. The interval 26–55 (RIAERKSKEPKEEKKDDDEEAPKPSSDLEA) is disordered. Residues 112-410 (FSPLRRISIK…VAMAYEEQNQ (299 aa)) form an I repeat. Residues 126–145 (SLFSMLIMCTILTNCIFMTM) form a helical membrane-spanning segment. At 146-150 (NNPPD) the chain is on the extracellular side. The chain crosses the membrane as a helical span at residues 151 to 172 (WTKNVEYTFTGIYTFESLVKIL). Residues 173 to 185 (ARGFCVGEFTFLR) lie on the Cytoplasmic side of the membrane. Residues 186 to 204 (DPWNWLDFVVIVFAYLTEF) form a helical membrane-spanning segment. Topologically, residues 205–210 (VNLGNV) are extracellular. N-linked (GlcNAc...) asparagine glycosylation occurs at Asn-209. Residues 211 to 227 (SALRTFRVLRALKTISV) traverse the membrane as a helical segment. At 228-241 (IPGLKTIVGALIQS) the chain is on the cytoplasmic side. The chain crosses the membrane as a helical span at residues 242–267 (VKKLSDVMILTVFCLSVFALIGLQLF). The Extracellular portion of the chain corresponds to 268–346 (MGNLKHKCFR…PDYGYTSFDT (79 aa)). A disulfide bond links Cys-275 and Cys-324. Residue Asn-283 is glycosylated (N-linked (GlcNAc...) asparagine). The pore-forming intramembrane region spans 347–363 (FSWAFLALFRLMTQDYW). Topologically, residues 364-376 (ENLYQQTLRAAGK) are extracellular. The chain crosses the membrane as a helical span at residues 377-402 (TYMIFFVVVIFLGSFYLINLILAVVA). Residues 403–745 (MAYEEQNQAN…CIYFIVMDPF (343 aa)) are Cytoplasmic-facing. Residues 461–471 (SSSETSKLSSK) show a composition bias toward low complexity. 2 disordered regions span residues 461–543 (SSSE…RGSL) and 565–611 (GSET…SPPM). Positions 474 to 486 (KERRNRRKKKNQK) are enriched in basic residues. Basic and acidic residues-rich tracts occupy residues 489 to 510 (SSGE…DSIR) and 573 to 585 (DEHS…ESRR). One copy of the II repeat lies at 726 to 989 (CSPYWIKFKK…EEDPDANNLQ (264 aa)). Residues 746–762 (VDLAITICIVLNTLFMA) traverse the membrane as a helical segment. Residues 763–771 (MEHHPMTEE) are Extracellular-facing. The chain crosses the membrane as a helical span at residues 772-796 (FKNVLAIGNLVFTGIFAAEMVLKLI). Residues 797–805 (AMDPYEYFQ) lie on the Cytoplasmic side of the membrane. The chain crosses the membrane as a helical span at residues 806 to 822 (VGWNIFDSLIVTLSLVE). At 823 to 831 (LFLADVEGL) the chain is on the extracellular side. A helical transmembrane segment spans residues 832–848 (SVLRSFRLLRVFKLAKS). Topologically, residues 849–865 (WPTLNMLIKIIGNSVGA) are cytoplasmic. Residues 866 to 888 (LGNLTLVLAIIVFIFAVVGMQLF) form a helical membrane-spanning segment. The Extracellular portion of the chain corresponds to 889-915 (GKSYKECVCKINDDCTLPRWHMNDFFH). A disulfide bridge links Cys-897 with Cys-903. An intramembrane region (pore-forming) is located at residues 916-928 (SFLIVFRVLCGEW). Residues 929 to 940 (IETMWDCMEVAG) lie on the Extracellular side of the membrane. A disulfide bridge connects residues Cys-935 and Cys-944. A helical transmembrane segment spans residues 941-967 (QAMCLIVYMMVMVIGNLVVLNLFLALL). At 968 to 1187 (LSSFSSDNLT…WWNIRKTCYK (220 aa)) the chain is on the cytoplasmic side. Positions 1102–1148 (NAEELSSDSDSEYSKVRLNRSSSSECSTVDNPLPGEGEEAEAEPMNS) are disordered. Over residues 1120-1131 (NRSSSSECSTVD) the composition is skewed to polar residues. Acidic residues predominate over residues 1137 to 1148 (EGEEAEAEPMNS). One copy of the III repeat lies at 1180 to 1488 (NIRKTCYKIV…KKYYNAMKKL (309 aa)). A helical membrane pass occupies residues 1188 to 1212 (IVEHSWFESFIVLMILLSSGALAFE). Over 1213-1224 (DIYIERKKTIKI) the chain is Extracellular. A helical membrane pass occupies residues 1225-1250 (ILEYADKIFTYIFILEMLLKWIAYGY). Topologically, residues 1251-1252 (KT) are cytoplasmic. A helical membrane pass occupies residues 1253-1278 (YFTNAWCWLDFLIVDVSLVTLVANTL). Topologically, residues 1279 to 1287 (GYSDLGPIK) are extracellular. Residues 1288 to 1304 (SLRTLRALRPLRALSRF) traverse the membrane as a helical segment. The Cytoplasmic segment spans residues 1305-1317 (EGMRVVVNALIGA). Residues 1318–1342 (IPSIMNVLLVCLIFWLIFSIMGVNL) form a helical membrane-spanning segment. At 1343-1394 (FAGKFYECINTTDGSRFPASQVPNRSECFALMNVSQNVRWKNLKVNFDNVGL) the chain is on the extracellular side. Cysteines 1350 and 1370 form a disulfide. 3 N-linked (GlcNAc...) asparagine glycosylation sites follow: Asn-1352, Asn-1366, and Asn-1375. Residues 1395–1405 (GYLSLLQVATF) constitute an intramembrane region (pore-forming). Topologically, residues 1406–1431 (KGWTIIMYAAVDSVNVDKQPKYEYSL) are extracellular. Residues 1432-1457 (YMYIYFVVFIIFGSFFTLNLFIGVII) form a helical membrane-spanning segment. The Cytoplasmic portion of the chain corresponds to 1458–1514 (DNFNQQKKKLGGQDIFMTEEQKKYYNAMKKLGSKKPQKPIPRPGNKIQGCIFDLVTN). Ser-1490 is subject to Phosphoserine; by PKC. The stretch at 1497–1795 (IPRPGNKIQG…WEKFDPDATQ (299 aa)) is one IV repeat. Residues 1515–1534 (QAFDISIMVLICLNMVTMMV) traverse the membrane as a helical segment. The Extracellular portion of the chain corresponds to 1535–1545 (EKEGQSQHMTE). Residues 1546-1567 (VLYWINVVFIILFTGECVLKLI) traverse the membrane as a helical segment. The Cytoplasmic portion of the chain corresponds to 1568–1576 (SLRHYYFTV). A helical membrane pass occupies residues 1577-1598 (GWNIFDFVVVIISIVGMFLADL). The Extracellular segment spans residues 1599–1607 (IETYFVSPT). A helical transmembrane segment spans residues 1608-1627 (LFRVIRLARIGRILRLVKGA). Residues 1628–1640 (KGIRTLLFALMMS) are Cytoplasmic-facing. The helical transmembrane segment at 1641–1663 (LPALFNIGLLLFLVMFIYAIFGM) threads the bilayer. Topologically, residues 1664–1686 (SNFAYVKKEDGINDMFNFETFGN) are extracellular. The segment at residues 1687-1699 (SMICLFQITTSAG) is an intramembrane region (pore-forming). At 1700 to 1733 (WDGLLAPILNSKPPDCDPKKVHPGSSVEGDCGNP) the chain is on the extracellular side. A disulfide bridge links Cys-1715 with Cys-1730. The helical transmembrane segment at 1734–1759 (SVGIFYFVSYIIISFLVVVNMYIAVI) threads the bilayer. Residues 1760 to 1988 (LENFSVATEE…KGKDSKESKK (229 aa)) are Cytoplasmic-facing. The 30-residue stretch at 1889-1918 (EDVSATVIQRAYRRYRLRQNVKNISSIYIK) folds into the IQ domain. The interval 1934-1988 (FDNVNENSSPEKTDATSSTTSPPSYDSVTKPDKEKYEQDRTEKEDKGKDSKESKK) is disordered. The segment covering 1948–1961 (ATSSTTSPPSYDSV) has biased composition (low complexity). The segment covering 1962–1988 (TKPDKEKYEQDRTEKEDKGKDSKESKK) has biased composition (basic and acidic residues).

This sequence belongs to the sodium channel (TC 1.A.1.10) family. Nav1.7/SCN9A subfamily. In terms of assembly, the Nav1.7 voltage-gated sodium channel consists of an ion-conducting alpha subunit SCN9A which is functional on its own regulated by one or more beta-1 (SCN1B), beta-2 (SCN2B), beta-3 (SCN3B) and beta-4 (SCN4B) subunits. SCN1B and SCN3B are non-covalently associated with SCN9A. SCN2B and SCN4B are disulfide-linked to SCN9A. SCN1B regulates channel inactivation. Interacts with NEDD4 and NEDD4L; regulates Nav1.7 activity most probably through ubiquitination and subsequent endocytosis. Interacts with TMEM233; modulates the gating properties of NaV1.7. In terms of processing, phosphorylation at Ser-1490 by PKC in a highly conserved cytoplasmic loop increases peak sodium currents. Ubiquitinated by NEDD4L; which may promote its endocytosis. In terms of tissue distribution, expressed strongly in dorsal root ganglion, with only minor levels elsewhere in the body, smooth muscle cells, MTC cell line and C-cell carcinoma. Also expressed in vagus nerves within the head and neck region. Isoform 1 is expressed preferentially in the central and peripheral nervous system. Isoform 2 is expressed preferentially in the dorsal root ganglion.

It is found in the cell membrane. It localises to the cell projection. Its subcellular location is the neuron projection. The protein localises to the axon. It catalyses the reaction Na(+)(in) = Na(+)(out). Inhibited by tetrodotoxin. Weakly inhibited by saxitoxin. Inhibited by the spider huwentoxin-IV that binds the extracellular loop S3-S4 of repeat II. Inhibited by the spider protoxin-II that binds the extracellular loop S3-S4 of repeats II and IV. Inhibited by the scorpion alpha-toxins CvIV4 and AaH2. Inhibited by the conotoxin GVIIJ. Inhibited by the spider beta/delta-theraphotoxin-Pre1a. In terms of biological role, pore-forming subunit of Nav1.7, a voltage-gated sodium (Nav) channel that directly mediates the depolarizing phase of action potentials in excitable membranes. Navs, also called VGSCs (voltage-gated sodium channels) or VDSCs (voltage-dependent sodium channels), operate by switching between closed and open conformations depending on the voltage difference across the membrane. In the open conformation they allow Na(+) ions to selectively pass through the pore, along their electrochemical gradient. The influx of Na(+) ions provokes membrane depolarization, initiating the propagation of electrical signals throughout cells and tissues. Nav1.7 plays a crucial role in controlling the excitability and action potential propagation from nociceptor neurons, thereby contributing to the sensory perception of pain. This Homo sapiens (Human) protein is Sodium channel protein type 9 subunit alpha.